A 990-amino-acid polypeptide reads, in one-letter code: Serine/threonine-protein kinase ATG1 (990 aa).

In terms of domain architecture, Protein kinase spans 15–334; sequence FVIENEIGKG…FDDFFASPVI (320 aa). ATP contacts are provided by residues 21 to 29 and lysine 44; that span reads IGKGSFAVV. Aspartate 165 acts as the Proton acceptor in catalysis. Over residues 375 to 408 the composition is skewed to polar residues; it reads VSSIEASTQQPGVQPPVSTATSPPALESRSTQEA. Disordered regions lie at residues 375-499, 529-566, 579-614, 750-784, and 970-990; these read VSSI…GGED, SRLG…TILS, ASTG…QGGQ, LSQE…SSSS, and SPVG…TESP. Low complexity-rich tracts occupy residues 529–554 and 587–613; these read SRLG…SAPG and PPGS…RQGG. Residues 750–771 show a composition bias toward polar residues; it reads LSQELDSSTATSGISPSRNSVQ. The segment covering 772–784 has biased composition (low complexity); that stretch reads GSARRVGSISSSS.

This sequence belongs to the protein kinase superfamily. Ser/Thr protein kinase family. APG1/unc-51/ULK1 subfamily. As to quaternary structure, homodimer. Forms a ternary complex with ATG13 and ATG17.

The protein resides in the cytoplasm. The protein localises to the preautophagosomal structure membrane. It catalyses the reaction L-seryl-[protein] + ATP = O-phospho-L-seryl-[protein] + ADP + H(+). The enzyme catalyses L-threonyl-[protein] + ATP = O-phospho-L-threonyl-[protein] + ADP + H(+). Functionally, serine/threonine protein kinase involved in the cytoplasm to vacuole transport (Cvt) and found to be essential in autophagy, where it is required for the formation of autophagosomes. Involved in the clearance of protein aggregates which cannot be efficiently cleared by the proteasome. Required for selective autophagic degradation of the nucleus (nucleophagy) as well as for mitophagy which contributes to regulate mitochondrial quantity and quality by eliminating the mitochondria to a basal level to fulfill cellular energy requirements and preventing excess ROS production. Also involved in endoplasmic reticulum-specific autophagic process, in selective removal of ER-associated degradation (ERAD) substrates. Plays a key role in ATG9 and ATG23 cycling through the pre-autophagosomal structure and is necessary to promote ATG18 binding to ATG9 through phosphorylation of ATG9. Catalyzes phosphorylation of ATG4, decreasing the interaction between ATG4 and ATG8 and impairing deconjugation of PE-conjugated forms of ATG8. Required for wild-type budding of haploid sporidia and for complete symptom development during pathogenic growth such as gall formation and teliospore production in ears of mature maize. This is Serine/threonine-protein kinase ATG1 from Mycosarcoma maydis (Corn smut fungus).